The primary structure comprises 341 residues: L-amino acid-D/L-Glu epimerase (341 aa).

Substrate contacts are provided by residues Thr132 and 157-159; that span reads KIK. Asp186, Glu212, and Asp237 together coordinate Mg(2+). Substrate is bound by residues Lys261 and 315 to 317; that span reads DLD.

It belongs to the mandelate racemase/muconate lactonizing enzyme family. It depends on Mg(2+) as a cofactor.

Catalyzes the epimerization of dipeptides with L-Glu in the second position. Has epimerase activity with L-Gly-L-Glu, L-Ala-L-Glu, L-Ser-L-Glu, L-Pro-L-Glu, L-Val-L-Glu, L-Met-L-Glu, L-Thr-L-Glu and L-Phe-L-Glu (in vitro). This chain is L-amino acid-D/L-Glu epimerase, found in Sulfurimonas denitrificans (strain ATCC 33889 / DSM 1251) (Thiomicrospira denitrificans (strain ATCC 33889 / DSM 1251)).